The sequence spans 637 residues: Acetolactate synthase 2, chloroplastic (637 aa).

Residues 1–73 constitute a chloroplast transit peptide; sequence MASFSFFGTI…SSKYAPNVPR (73 aa). Positions 35–69 are disordered; sequence RRATRVSVSANSKKDQDRTASRRENPSTFSSKYAP. Residues 46 to 59 are compositionally biased toward basic and acidic residues; that stretch reads SKKDQDRTASRREN. Residue Glu120 participates in thiamine diphosphate binding. Residues Arg222, 329 to 350, and 372 to 391 each bind FAD; these read HGTV…FGVR and DIDS…VCCD. Residues 462 to 542 are thiamine pyrophosphate binding; it reads QHQMWAAQFY…VKVLLINNQH (81 aa). Mg(2+) contacts are provided by Asp513 and Asn540.

This sequence belongs to the TPP enzyme family. It depends on Mg(2+) as a cofactor. Requires thiamine diphosphate as cofactor.

It is found in the plastid. The protein localises to the chloroplast. The enzyme catalyses 2 pyruvate + H(+) = (2S)-2-acetolactate + CO2. It functions in the pathway amino-acid biosynthesis; L-isoleucine biosynthesis; L-isoleucine from 2-oxobutanoate: step 1/4. It participates in amino-acid biosynthesis; L-valine biosynthesis; L-valine from pyruvate: step 1/4. This is Acetolactate synthase 2, chloroplastic from Brassica napus (Rape).